Reading from the N-terminus, the 425-residue chain is Histone-binding protein RBBP4 (425 aa).

Ala2 is modified (N-acetylalanine). 7 WD repeats span residues 32-125, 126-175, 176-223, 225-270, 271-314, 315-371, and 372-404; these read YDLV…NHEG, EVNR…RLRG, HQKE…KTIF, GHTA…HSVD, AHTA…HSFE, SHKD…FIHG, and GHTAKISDFSWNPNEPWVICSVSEDNIMQVWQM. An interaction with HAT1 region spans residues 361-406; the sequence is DGPPELLFIHGGHTAKISDFSWNPNEPWVICSVSEDNIMQVWQMAE.

This sequence belongs to the WD repeat RBAP46/RBAP48/MSI1 family. In terms of assembly, binds directly to histone H4, probably via helix 1 of the histone fold, a region that is not accessible when histone H4 is in chromatin. Interacts with CHAF1A, HDAC1, HDAC2, HDAC3 and HIRA. May also interact with HAT1.

Its subcellular location is the nucleus. The protein resides in the chromosome. It localises to the telomere. Its function is as follows. Core histone-binding subunit that may target chromatin assembly factors, chromatin remodeling factors and histone deacetylases to their histone substrates in a manner that is regulated by nucleosomal DNA. Component of several complexes which regulate chromatin metabolism. The chain is Histone-binding protein RBBP4 (RBBP4) from Gallus gallus (Chicken).